Reading from the N-terminus, the 1651-residue chain is Putative serine/threonine-protein kinase/receptor R818 (1651 aa).

An N-terminal signal peptide occupies residues 1 to 19 (MKSIGIFVVALWLTHFCDG). 14 N-linked (GlcNAc...) asparagine; by host glycosylation sites follow: asparagine 111, asparagine 135, asparagine 190, asparagine 236, asparagine 275, asparagine 276, asparagine 287, asparagine 452, asparagine 455, asparagine 477, asparagine 495, asparagine 540, asparagine 596, and asparagine 722. Residues 749 to 769 (IILAIVIPVSFVICCIIIVLV) traverse the membrane as a helical segment. The region spanning 793–1057 (LDFMESLGSG…EIMTKLSTLI (265 aa)) is the Protein kinase 1 domain. ATP-binding positions include 799–807 (LGSGGSGEV) and lysine 820. Catalysis depends on aspartate 915, which acts as the Proton acceptor. A disordered region spans residues 1089–1115 (IHNNDETKNSFGSTTYGSNTISSSSNT). The span at 1100–1115 (GSTTYGSNTISSSSNT) shows a compositional bias: low complexity. In terms of domain architecture, Guanylate cyclase spans 1135–1278 (IIVFTDIISA…VTVNIAAKIT (144 aa)). The Protein kinase 2 domain occupies 1394–1645 (IQIGKQIGVG…DVIMGLNDML (252 aa)). Residues 1400–1408 (IGVGSYGIV) and lysine 1421 each bind ATP. Aspartate 1515 acts as the Proton acceptor in catalysis.

Its subcellular location is the membrane. The catalysed reaction is L-seryl-[protein] + ATP = O-phospho-L-seryl-[protein] + ADP + H(+). The enzyme catalyses L-threonyl-[protein] + ATP = O-phospho-L-threonyl-[protein] + ADP + H(+). The sequence is that of Putative serine/threonine-protein kinase/receptor R818 from Acanthamoeba polyphaga mimivirus (APMV).